Consider the following 303-residue polypeptide: Sulfate adenylyltransferase subunit 2 (303 aa).

The tract at residues 281-303 is disordered; sequence RQGRVIDHDSSGSMEKKKQEGYF.

This sequence belongs to the PAPS reductase family. CysD subfamily. In terms of assembly, heterodimer composed of CysD, the smaller subunit, and CysN.

The enzyme catalyses sulfate + ATP + H(+) = adenosine 5'-phosphosulfate + diphosphate. It functions in the pathway sulfur metabolism; hydrogen sulfide biosynthesis; sulfite from sulfate: step 1/3. Its function is as follows. With CysN forms the ATP sulfurylase (ATPS) that catalyzes the adenylation of sulfate producing adenosine 5'-phosphosulfate (APS) and diphosphate, the first enzymatic step in sulfur assimilation pathway. APS synthesis involves the formation of a high-energy phosphoric-sulfuric acid anhydride bond driven by GTP hydrolysis by CysN coupled to ATP hydrolysis by CysD. This chain is Sulfate adenylyltransferase subunit 2, found in Saccharophagus degradans (strain 2-40 / ATCC 43961 / DSM 17024).